A 394-amino-acid chain; its full sequence is Succinate--CoA ligase [ADP-forming] subunit beta (394 aa).

Residues K46, 53 to 55, E99, C102, and E107 each bind ATP; that span reads GRG. Residues N199 and D213 each contribute to the Mg(2+) site. Substrate-binding positions include N264 and 321-323; that span reads GIV.

It belongs to the succinate/malate CoA ligase beta subunit family. Heterotetramer of two alpha and two beta subunits. It depends on Mg(2+) as a cofactor.

The catalysed reaction is succinate + ATP + CoA = succinyl-CoA + ADP + phosphate. It carries out the reaction GTP + succinate + CoA = succinyl-CoA + GDP + phosphate. It participates in carbohydrate metabolism; tricarboxylic acid cycle; succinate from succinyl-CoA (ligase route): step 1/1. In terms of biological role, succinyl-CoA synthetase functions in the citric acid cycle (TCA), coupling the hydrolysis of succinyl-CoA to the synthesis of either ATP or GTP and thus represents the only step of substrate-level phosphorylation in the TCA. The beta subunit provides nucleotide specificity of the enzyme and binds the substrate succinate, while the binding sites for coenzyme A and phosphate are found in the alpha subunit. The sequence is that of Succinate--CoA ligase [ADP-forming] subunit beta from Haemophilus influenzae (strain PittGG).